The following is a 61-amino-acid chain: Large ribosomal subunit protein uL29 (61 aa).

This sequence belongs to the universal ribosomal protein uL29 family.

This chain is Large ribosomal subunit protein uL29, found in Stenotrophomonas maltophilia (strain R551-3).